Here is a 449-residue protein sequence, read N- to C-terminus: MADTVLNSAPSKAAPRISFVSLGCPKALVDSERIVTRLRAEGYELTKTHQGADLVVVNTCGFLDSAKAESLNAIGEALAENGKVVVTGCMGAEPEQIREVHPSVLAITGPQQYESVLAAVHEAVPPAHDPFLDLVPAEGVKLTPRHYAYLKISEGCSNRCTFCIIPKLRGDLVSRPAGDVLREAERLVKAGVKELLVISQDTSAYGVDLRYATSPWGDKEVAARFLDLAGALGDLGAWVRLHYVYPYPHVDAVMELMAAGKVLPYLDIPFQHASPTVLKRMKRPASQEKTLARIQAWRAAVPDLTLRSTFIVGFPGETEAEFEELLGFLEEAEIDRAGCFKFEPVRGADANALENPVPDAVKAERYDRFMRTQQKVSARRLKRKVGTRQSVIIDTVTPDGGIGRTKGDAPEIDGTVKVFARRPLRVGEIATVKIEAAGPYDLSGTAVGF.

The MTTase N-terminal domain maps to 15-125 (PRISFVSLGC…VLAAVHEAVP (111 aa)). [4Fe-4S] cluster is bound by residues C24, C60, C89, C156, C160, and C163. Positions 142-379 (LTPRHYAYLK…MRTQQKVSAR (238 aa)) constitute a Radical SAM core domain. The 67-residue stretch at 382–448 (KRKVGTRQSV…PYDLSGTAVG (67 aa)) folds into the TRAM domain.

The protein belongs to the methylthiotransferase family. RimO subfamily. It depends on [4Fe-4S] cluster as a cofactor.

Its subcellular location is the cytoplasm. It catalyses the reaction L-aspartate(89)-[ribosomal protein uS12]-hydrogen + (sulfur carrier)-SH + AH2 + 2 S-adenosyl-L-methionine = 3-methylsulfanyl-L-aspartate(89)-[ribosomal protein uS12]-hydrogen + (sulfur carrier)-H + 5'-deoxyadenosine + L-methionine + A + S-adenosyl-L-homocysteine + 2 H(+). Catalyzes the methylthiolation of an aspartic acid residue of ribosomal protein uS12. This is Ribosomal protein uS12 methylthiotransferase RimO from Xanthobacter autotrophicus (strain ATCC BAA-1158 / Py2).